Here is a 317-residue protein sequence, read N- to C-terminus: Small ribosomal subunit protein uS2 (317 aa).

The interval 277-317 (SDWTAPAANPANAAAAGAPAPAPAAATTTESWGGSGAENWG) is disordered. Low complexity predominate over residues 281 to 302 (APAANPANAAAAGAPAPAPAAA).

Belongs to the universal ribosomal protein uS2 family. As to quaternary structure, component of the small ribosomal subunit. Mature ribosomes consist of a small (40S) and a large (60S) subunit. The 40S subunit contains about 33 different proteins and 1 molecule of RNA (18S). The 60S subunit contains about 49 different proteins and 3 molecules of RNA (28S, 5.8S and 5S). Interacts with ribosomal protein S21.

The protein localises to the cytoplasm. Its function is as follows. Required for the assembly and/or stability of the 40S ribosomal subunit. Required for the processing of the 20S rRNA-precursor to mature 18S rRNA in a late step of the maturation of 40S ribosomal subunits. The protein is Small ribosomal subunit protein uS2 of Urechis caupo (Innkeeper worm).